The following is a 393-amino-acid chain: Dual-specificity RNA methyltransferase RlmN (393 aa).

Residues 1–22 are disordered; the sequence is MSEQLLSELSPVAATSPSPAPA. Over residues 10-22 the composition is skewed to low complexity; that stretch reads SPVAATSPSPAPA. Glu114 functions as the Proton acceptor in the catalytic mechanism. Residues 120–358 enclose the Radical SAM core domain; that stretch reads EDDRATLCVS…TTIVRKTRGD (239 aa). A disulfide bridge connects residues Cys127 and Cys364. [4Fe-4S] cluster contacts are provided by Cys134, Cys138, and Cys141. S-adenosyl-L-methionine is bound by residues 188 to 189, Ser220, 242 to 244, and Asn321; these read GE and SLH. Cys364 serves as the catalytic S-methylcysteine intermediate.

The protein belongs to the radical SAM superfamily. RlmN family. The cofactor is [4Fe-4S] cluster.

Its subcellular location is the cytoplasm. The catalysed reaction is adenosine(2503) in 23S rRNA + 2 reduced [2Fe-2S]-[ferredoxin] + 2 S-adenosyl-L-methionine = 2-methyladenosine(2503) in 23S rRNA + 5'-deoxyadenosine + L-methionine + 2 oxidized [2Fe-2S]-[ferredoxin] + S-adenosyl-L-homocysteine. It carries out the reaction adenosine(37) in tRNA + 2 reduced [2Fe-2S]-[ferredoxin] + 2 S-adenosyl-L-methionine = 2-methyladenosine(37) in tRNA + 5'-deoxyadenosine + L-methionine + 2 oxidized [2Fe-2S]-[ferredoxin] + S-adenosyl-L-homocysteine. Functionally, specifically methylates position 2 of adenine 2503 in 23S rRNA and position 2 of adenine 37 in tRNAs. m2A2503 modification seems to play a crucial role in the proofreading step occurring at the peptidyl transferase center and thus would serve to optimize ribosomal fidelity. The sequence is that of Dual-specificity RNA methyltransferase RlmN from Sodalis glossinidius (strain morsitans).